We begin with the raw amino-acid sequence, 270 residues long: Phosphatidate cytidylyltransferase (270 aa).

The next 7 helical transmembrane spans lie at 19 to 39, 53 to 73, 76 to 96, 101 to 121, 126 to 146, 183 to 203, and 248 to 268; these read LWLT…IGLA, TAFS…LLIL, GALL…VTQW, GWPA…SLLR, FGFT…IAAY, LVAS…ALLL, and ALLY…AIFF.

Belongs to the CDS family.

It localises to the cell inner membrane. The catalysed reaction is a 1,2-diacyl-sn-glycero-3-phosphate + CTP + H(+) = a CDP-1,2-diacyl-sn-glycerol + diphosphate. The protein operates within phospholipid metabolism; CDP-diacylglycerol biosynthesis; CDP-diacylglycerol from sn-glycerol 3-phosphate: step 3/3. The protein is Phosphatidate cytidylyltransferase (cdsA) of Brucella melitensis biotype 1 (strain ATCC 23456 / CCUG 17765 / NCTC 10094 / 16M).